Consider the following 110-residue polypeptide: U1-lycotoxin-Ls1dd (110 aa).

The N-terminal stretch at 1–20 is a signal peptide; it reads MKFVLLFGVLLVTLFSYSSA. Residues 21 to 44 constitute a propeptide that is removed on maturation; that stretch reads EMLDDFDQADEDELLSLIEKEEAR. Cystine bridges form between Cys47–Cys62, Cys54–Cys71, Cys61–Cys89, and Cys73–Cys87.

The protein belongs to the neurotoxin 19 (CSTX) family. 03 subfamily. In terms of tissue distribution, expressed by the venom gland.

It is found in the secreted. The polypeptide is U1-lycotoxin-Ls1dd (Lycosa singoriensis (Wolf spider)).